The sequence spans 1087 residues: Gelsolin-related protein of 125 kDa (1087 aa).

Positions 1-40 are disordered; it reads MEEDNIVDSKEIENNVEDKKEETPSSSPSPSSSLQQQQEE. Over residues 7-23 the composition is skewed to basic and acidic residues; it reads VDSKEIENNVEDKKEET. Residues 24-40 are compositionally biased toward low complexity; the sequence is PSSSPSPSSSLQQQQEE. Gelsolin-like repeat units lie at residues 73 to 146, 183 to 286, 335 to 442, and 465 to 538; these read PFHF…PTFL, FLFK…FSKW, GKLL…FGTE, and TQLF…DNFW. Positions 550–598 form a coiled coil; that stretch reads INTFINENKEEKEKEEEEKEEEEEEEEEEEEEEEEEKDNNKTTTIIKHL. Residues 555-592 form a disordered region; the sequence is NENKEEKEKEEEEKEEEEEEEEEEEEEEEEEKDNNKTT. The segment covering 562 to 586 has biased composition (acidic residues); it reads EKEEEEKEEEEEEEEEEEEEEEEEK. Residues 614–692 form a Gelsolin-like 5 repeat; sequence IFKADQINPF…EQYNESPLFK (79 aa). Residues 710–912 are a coiled coil; that stretch reads IISYKQKLAE…ETVNEENEVG (203 aa). Composition is skewed to basic and acidic residues over residues 732-770, 779-808, 817-840, and 849-900; these read KQQQ…KEEE, EEVK…KEVN, EEVK…KEEE, and EEVK…KVNE. The interval 732 to 1087 is disordered; it reads KQQQEQEQEQ…HNRSSSLTHA (356 aa). Residues 901–910 show a composition bias toward acidic residues; the sequence is ENETVNEENE. Composition is skewed to polar residues over residues 925-939 and 950-961; these read ANSS…NEGS and EPITPSVVSSSG. Over residues 983–1002 the composition is skewed to basic residues; that stretch reads QGRKGGRKSHGKNQPQHKKN. Positions 1018–1040 are enriched in polar residues; the sequence is KSLNLDIDNQSFDLNSINNNNSV. The segment covering 1047 to 1065 has biased composition (low complexity); that stretch reads SSPLSFSSSSINSNSTHNT. Residues 1066–1080 are compositionally biased toward basic residues; it reads PSKKNKNKNKKKHNR.

This sequence belongs to the villin/gelsolin family. As to quaternary structure, interacts with rasD and abpC.

Its subcellular location is the cytoplasmic vesicle. Functionally, involved in phototaxis. Required for coupling photodetection to the locomotory machinery of slugs. May be essential in the natural environment for the propagation of spores. This chain is Gelsolin-related protein of 125 kDa (gnrA), found in Dictyostelium discoideum (Social amoeba).